A 267-amino-acid polypeptide reads, in one-letter code: Thyroxine 5-deiodinase (267 aa).

At 1–15 (MHDSGGVQMARALKH) the chain is on the cytoplasmic side. The chain crosses the membrane as a helical; Signal-anchor for type II membrane protein span at residues 16–36 (AALCLMLLPRFLLAAVMLWLL). Residues 37–267 (DFLCIRKKVL…VNSQTAVLHV (231 aa)) lie on the Extracellular side of the membrane. Residue selenocysteine 131 is part of the active site. Position 131 (selenocysteine 131) is a non-standard amino acid, selenocysteine.

The protein belongs to the iodothyronine deiodinase family. As to quaternary structure, monomer. Homodimer. May undergo minor heretodimerization with DIO1 and DIO2.

It is found in the cell membrane. Its subcellular location is the endosome membrane. It catalyses the reaction 3,3',5'-triiodo-L-thyronine + iodide + A + H(+) = L-thyroxine + AH2. The catalysed reaction is 3,3'-diiodo-L-thyronine + iodide + A + H(+) = 3,3',5-triiodo-L-thyronine + AH2. The enzyme catalyses 3-iodo-L-thyronine + iodide + A + H(+) = 3,5-diiodo-L-thyronine + AH2. It carries out the reaction L-thyronine + iodide + A + H(+) = 3-iodo-L-thyronine + AH2. It catalyses the reaction 3',5'-diiodo-L-thyronine + iodide + A + H(+) = 3,3',5'-triiodo-L-thyronine + AH2. The catalysed reaction is 3'-iodo-L-thyronine + iodide + A + H(+) = 3,3'-diiodo-L-thyronine + AH2. The enzyme catalyses 3,3',5'-triiodothyronamine + iodide + A + H(+) = 3,3',5,5'-tetraiodothyronamine + AH2. It carries out the reaction 3',5'-diiodothyronamine + iodide + A + H(+) = 3,3',5'-triiodothyronamine + AH2. It catalyses the reaction 3,3'-diiodothyronamine + iodide + A + H(+) = 3,3',5-triiodothyronamine + AH2. The catalysed reaction is 3-iodothyronamine + iodide + A + H(+) = 3,5-diiodothyronamine + AH2. The enzyme catalyses 3'-iodothyronamine + iodide + A + H(+) = 3,3'-diiodothyronamine + AH2. It carries out the reaction thyronamine + iodide + A + H(+) = 3-iodothyronamine + AH2. In terms of biological role, plays a crucial role in the metabolism of thyroid hormones (TH) and has specific roles in TH activation and inactivation by deiodination. Catalyzes the deiodination of L-thyroxine (T4) to 3,3',5'-triiodothyronine (rT3), 3,5,3'-triiodothyronine (T3) to 3,3'-diiodothyronine (3,3'-T2), 3,5-diiodothyronine (3,5-T2) to 3-monoiodothyronine (3-T1), rT3 to 3',5'-diiodothyronine (3',5'-T2) and 3,3'-T2 to 3'-monoiodothyronine (3'-T1) via inner-ring deiodination (IRD). Catalyzes the deiodination of 3-T1 to L-thyronine (T0) via outer-ring deiodination (ORD). Catalyzes the tyrosyl ring deiodinations of 3,3',5,5'-tetraiodothyronamine, 3,3',5'-triiodothyronamine, 3,5,3'-triiodothyronamine, 3,5-diiodothyronamine, 3,3'-diiodothyronamine and 3-iodothyronamine. This Sparus aurata (Gilthead sea bream) protein is Thyroxine 5-deiodinase (dio3).